An 860-amino-acid polypeptide reads, in one-letter code: Leucine--tRNA ligase (860 aa).

The short motif at 42–52 is the 'HIGH' region element; that stretch reads PYPSGRLHMGH. Positions 619–623 match the 'KMSKS' region motif; sequence KMSKS. K622 is an ATP binding site.

The protein belongs to the class-I aminoacyl-tRNA synthetase family.

It is found in the cytoplasm. The enzyme catalyses tRNA(Leu) + L-leucine + ATP = L-leucyl-tRNA(Leu) + AMP + diphosphate. In Mannheimia succiniciproducens (strain KCTC 0769BP / MBEL55E), this protein is Leucine--tRNA ligase.